A 274-amino-acid polypeptide reads, in one-letter code: Protein RecA (274 aa).

ATP is bound at residue 43–50 (GPESSGKT).

The protein belongs to the RecA family.

It localises to the cytoplasm. Its function is as follows. Can catalyze the hydrolysis of ATP in the presence of single-stranded DNA, the ATP-dependent uptake of single-stranded DNA by duplex DNA, and the ATP-dependent hybridization of homologous single-stranded DNAs. It interacts with LexA causing its activation and leading to its autocatalytic cleavage. This Neisseria polysaccharea protein is Protein RecA.